Reading from the N-terminus, the 220-residue chain is Guanylate kinase (220 aa).

The 180-residue stretch at 15–194 (GLMLVISSPS…ALDAVQSIVK (180 aa)) folds into the Guanylate kinase-like domain. ATP is bound at residue 22-29 (SPSGAGKS).

The protein belongs to the guanylate kinase family.

The protein resides in the cytoplasm. The enzyme catalyses GMP + ATP = GDP + ADP. In terms of biological role, essential for recycling GMP and indirectly, cGMP. This chain is Guanylate kinase, found in Rhizobium johnstonii (strain DSM 114642 / LMG 32736 / 3841) (Rhizobium leguminosarum bv. viciae).